We begin with the raw amino-acid sequence, 408 residues long: Ribonuclease T2-like (408 aa).

Residues 1–25 (MLQSIPGPQHILKALTGSLGLSTIF) form the signal peptide. 4 disulfides stabilise this stretch: Cys38-Cys56, Cys45-Cys92, Cys55-Cys158, and Cys100-Cys150. His85 is an active-site residue. Asn108 is a glycosylation site (N-linked (GlcNAc...) asparagine). Active-site residues include Glu143 and His147. An N-linked (GlcNAc...) asparagine glycan is attached at Asn173. The cysteines at positions 222 and 257 are disulfide-linked. The disordered stretch occupies residues 268–292 (KHREPSRTTDTPSQPTTTGTPFKGR). The segment covering 275–288 (TTDTPSQPTTTGTP) has biased composition (low complexity). A glycan (N-linked (GlcNAc...) asparagine) is linked at Asn372.

Belongs to the RNase T2 family.

Its subcellular location is the vacuole lumen. The protein resides in the cytoplasm. The enzyme catalyses a ribonucleotidyl-ribonucleotide-RNA + H2O = a 3'-end 3'-phospho-ribonucleotide-RNA + a 5'-end dephospho-ribonucleoside-RNA + H(+). In terms of biological role, rnase which modulates cell survival under stress conditions. Released from the vacuole to the cytoplasm during stress to promote tRNA and rRNA cleavage and to activate separately a downstream pathway that promotes cell death. Involved in cell size, vacuolar morphology and growth at high temperatures and high salt concentration. The polypeptide is Ribonuclease T2-like (rny1) (Aspergillus fumigatus (strain ATCC MYA-4609 / CBS 101355 / FGSC A1100 / Af293) (Neosartorya fumigata)).